The sequence spans 373 residues: XK-related protein 9 (373 aa).

The next 8 membrane-spanning stretches (helical) occupy residues 8-28, 38-58, 166-186, 203-223, 224-244, 256-276, 295-315, and 318-338; these read FMMS…DIWV, YVFS…AQCF, AAIM…QVAL, ITYL…VVLL, LFLN…LGII, CISM…FTFF, VLGT…IFNP, and FIPI…FLIV.

It belongs to the XK family. In terms of processing, undergoes proteolytic processing by caspase-3 (CASP3), caspase-6 (CASP6) and caspase-7 (CASP7) to generate the XK-related protein 9, processed form, leading to its activation.

It localises to the cell membrane. It carries out the reaction a 1,2-diacyl-sn-glycero-3-phospho-L-serine(in) = a 1,2-diacyl-sn-glycero-3-phospho-L-serine(out). With respect to regulation, activated upon caspase cleavage to generate the XK-related protein 9, processed form. Does not act prior the onset of apoptosis. Functionally, phospholipid scramblase that promotes phosphatidylserine exposure on apoptotic cell surface. Phosphatidylserine is a specific marker only present at the surface of apoptotic cells and acts as a specific signal for engulfment. In Pan troglodytes (Chimpanzee), this protein is XK-related protein 9.